The primary structure comprises 225 residues: Uracil-DNA glycosylase (225 aa).

Catalysis depends on Asp65, which acts as the Proton acceptor.

Belongs to the uracil-DNA glycosylase (UDG) superfamily. UNG family.

It localises to the cytoplasm. The enzyme catalyses Hydrolyzes single-stranded DNA or mismatched double-stranded DNA and polynucleotides, releasing free uracil.. Its function is as follows. Excises uracil residues from the DNA which can arise as a result of misincorporation of dUMP residues by DNA polymerase or due to deamination of cytosine. This Alkaliphilus oremlandii (strain OhILAs) (Clostridium oremlandii (strain OhILAs)) protein is Uracil-DNA glycosylase.